A 576-amino-acid chain; its full sequence is Low-affinity glucose transporter HXT4 (576 aa).

Residues 1–56 (MSEEAAYQEDTAVQNTPADALSPVESDSNSALSTPSNKAERDDMKDFDENHEESNN) are disordered. The Cytoplasmic segment spans residues 1–66 (MSEEAAYQED…YVEIPKKPAS (66 aa)). Polar residues predominate over residues 25 to 37 (ESDSNSALSTPSN). Residues 38–54 (KAERDDMKDFDENHEES) show a composition bias toward basic and acidic residues. Lys45 is covalently cross-linked (Glycyl lysine isopeptide (Lys-Gly) (interchain with G-Cter in ubiquitin)). A helical transmembrane segment spans residues 67–87 (AYVTVSICCLMVAFGGFVFGW). Topologically, residues 88–122 (DTGTISGFVAQTDFIRRFGMKHHDGTYYLSKVRTG) are extracellular. Residues 123 to 143 (LIVSIFNIGCAIGGIILARLG) traverse the membrane as a helical segment. The Cytoplasmic segment spans residues 144 to 149 (DMYGRK). The helical transmembrane segment at 150 to 170 (MGLIVVVVIYIIGIIIQIASI) threads the bilayer. Over 171-180 (NKWYQYFIGR) the chain is Extracellular. The helical transmembrane segment at 181-201 (IISGLGVGGIAVLSPMLISEV) threads the bilayer. Residues 202–207 (SPKHIR) lie on the Cytoplasmic side of the membrane. The helical transmembrane segment at 208 to 228 (GTLVSCYQLMITLGIFLGYCT) threads the bilayer. At 229 to 242 (NYGTKTYTNSVQWR) the chain is on the extracellular side. Residues 243–263 (VPLGLGFAWALFMIGGMTFVP) traverse the membrane as a helical segment. The Cytoplasmic segment spans residues 264-346 (ESPRYLVEVG…IQSLQQLTGD (83 aa)). The chain crosses the membrane as a helical span at residues 347–363 (NYFFYYGTTVFTAVGLE). Residues 364-369 (DSFETS) lie on the Extracellular side of the membrane. Residues 370 to 387 (IVLGIVNFASTFVGIFLV) traverse the membrane as a helical segment. Residues 388–394 (ERYGRRR) are Cytoplasmic-facing. The chain crosses the membrane as a helical span at residues 395-415 (CLLWGAASMTACMVVFASVGV). Residues 416–437 (TRLWPNGKKNGSSKGAGNCMIV) are Extracellular-facing. Asn425 carries an N-linked (GlcNAc...) asparagine glycan. The helical transmembrane segment at 438–458 (FTCFYLFCFATTWAPIPFVVN) threads the bilayer. At 459–475 (SETFPLRVKSKCMAIAQ) the chain is on the cytoplasmic side. The chain crosses the membrane as a helical span at residues 476–496 (ACNWIWGFLIGFFTPFISGAI). Residue Asp497 is a topological domain, extracellular. The chain crosses the membrane as a helical span at residues 498 to 518 (FYYGYVFMGCLVFSYFYVFFF). Over 519–576 (VPETKGLTLEEVNTLWEEGVLPWKSPSWVPPNKRGTDYNADDLMHDDQPFYKKMFGKK) the chain is Cytoplasmic.

Belongs to the major facilitator superfamily. Sugar transporter (TC 2.A.1.1) family.

It localises to the cell membrane. Xylose uptake is strongly inhibited by glucose. Its function is as follows. Low-affinity glucose transporter. Can also transport xylose. The polypeptide is Low-affinity glucose transporter HXT4 (HXT4) (Saccharomyces cerevisiae (strain YJM789) (Baker's yeast)).